A 275-amino-acid chain; its full sequence is Large ribosomal subunit protein uL2 (275 aa).

The disordered stretch occupies residues 224–251 (VMNPVDHPHGGGEGRSPIGRKAPVTPWG).

Belongs to the universal ribosomal protein uL2 family. As to quaternary structure, part of the 50S ribosomal subunit. Forms a bridge to the 30S subunit in the 70S ribosome.

Functionally, one of the primary rRNA binding proteins. Required for association of the 30S and 50S subunits to form the 70S ribosome, for tRNA binding and peptide bond formation. It has been suggested to have peptidyltransferase activity; this is somewhat controversial. Makes several contacts with the 16S rRNA in the 70S ribosome. The sequence is that of Large ribosomal subunit protein uL2 from Heliobacterium modesticaldum (strain ATCC 51547 / Ice1).